The chain runs to 135 residues: UPF0102 protein Mkms_2031 (135 aa).

Belongs to the UPF0102 family.

The protein is UPF0102 protein Mkms_2031 of Mycobacterium sp. (strain KMS).